Consider the following 382-residue polypeptide: UDP-N-acetylglucosamine--N-acetylmuramyl-(pentapeptide) pyrophosphoryl-undecaprenol N-acetylglucosamine transferase (382 aa).

UDP-N-acetyl-alpha-D-glucosamine-binding positions include 11–13 (TGG), N124, R165, S200, I254, and Q299.

The protein belongs to the glycosyltransferase 28 family. MurG subfamily.

It is found in the cell inner membrane. The catalysed reaction is di-trans,octa-cis-undecaprenyl diphospho-N-acetyl-alpha-D-muramoyl-L-alanyl-D-glutamyl-meso-2,6-diaminopimeloyl-D-alanyl-D-alanine + UDP-N-acetyl-alpha-D-glucosamine = di-trans,octa-cis-undecaprenyl diphospho-[N-acetyl-alpha-D-glucosaminyl-(1-&gt;4)]-N-acetyl-alpha-D-muramoyl-L-alanyl-D-glutamyl-meso-2,6-diaminopimeloyl-D-alanyl-D-alanine + UDP + H(+). It functions in the pathway cell wall biogenesis; peptidoglycan biosynthesis. Its function is as follows. Cell wall formation. Catalyzes the transfer of a GlcNAc subunit on undecaprenyl-pyrophosphoryl-MurNAc-pentapeptide (lipid intermediate I) to form undecaprenyl-pyrophosphoryl-MurNAc-(pentapeptide)GlcNAc (lipid intermediate II). In Nitratidesulfovibrio vulgaris (strain DSM 19637 / Miyazaki F) (Desulfovibrio vulgaris), this protein is UDP-N-acetylglucosamine--N-acetylmuramyl-(pentapeptide) pyrophosphoryl-undecaprenol N-acetylglucosamine transferase.